A 177-amino-acid polypeptide reads, in one-letter code: Co-chaperone protein HscB homolog (177 aa).

In terms of domain architecture, J spans 8 to 80 (DFFALFGLPR…LPRAQYMLEL (73 aa)).

The protein belongs to the HscB family. Interacts with HscA and stimulates its ATPase activity.

Functionally, co-chaperone involved in the maturation of iron-sulfur cluster-containing proteins. Seems to help targeting proteins to be folded toward HscA. The protein is Co-chaperone protein HscB homolog of Aromatoleum aromaticum (strain DSM 19018 / LMG 30748 / EbN1) (Azoarcus sp. (strain EbN1)).